The primary structure comprises 193 residues: Regulator of free ubiquitin chains 1 (193 aa).

This sequence belongs to the RFU1 family.

It is found in the endosome. Inhibitor of the DOA4 deubiquitinase involved in the regulation of protein degradation by the proteasome and maintenance of a normal level of free ubiquitin. In Eremothecium gossypii (strain ATCC 10895 / CBS 109.51 / FGSC 9923 / NRRL Y-1056) (Yeast), this protein is Regulator of free ubiquitin chains 1 (RFU1).